Consider the following 211-residue polypeptide: Xanthine phosphoribosyltransferase (211 aa).

Residues L31 and N38 each contribute to the xanthine site. 138 to 142 (ANGRT) contributes to the 5-phospho-alpha-D-ribose 1-diphosphate binding site. K166 serves as a coordination point for xanthine.

It belongs to the purine/pyrimidine phosphoribosyltransferase family. Xpt subfamily. As to quaternary structure, homodimer.

Its subcellular location is the cytoplasm. The enzyme catalyses XMP + diphosphate = xanthine + 5-phospho-alpha-D-ribose 1-diphosphate. It functions in the pathway purine metabolism; XMP biosynthesis via salvage pathway; XMP from xanthine: step 1/1. In terms of biological role, converts the preformed base xanthine, a product of nucleic acid breakdown, to xanthosine 5'-monophosphate (XMP), so it can be reused for RNA or DNA synthesis. This is Xanthine phosphoribosyltransferase from Chloroflexus aurantiacus (strain ATCC 29364 / DSM 637 / Y-400-fl).